Here is a 305-residue protein sequence, read N- to C-terminus: MDSVKKYLYTCDHVGFLELTKETWKNRWFPSQVPLQGDVCCVDMLNERDLEFYKFLFTFLGMAEKLVNINIEDLLSQFDSHDISHYYAEQMAMENIHGKVYANILNMLFKNNITEVYSYACDIMNDSALQEKLRWLNGRVTEASDKAEKILLFLLVEGIFFISSFFSIGLFRVRGIMNGICLANDYIARDEMLHTSAAALLYNTMTKSSERPSEDWIYKLFREAVEVEFKFIAAKGYGVSLVNVHEIRQFLQATADRILESINLNPIYGSLPPENCPLAYTSSTKSVNFFERDNSDYTGTLTNDL.

Glu64, Glu94, and His97 together coordinate Fe cation. Tyr101 is a catalytic residue. The chain crosses the membrane as a helical span at residues 150 to 170 (ILLFLLVEGIFFISSFFSIGL). Residues Glu157, Glu191, and His194 each contribute to the Fe cation site.

This sequence belongs to the ribonucleoside diphosphate reductase small chain family. In terms of assembly, heterotetramer composed of a homodimer of the large subunit (R1) and a homodimer of the small subunit (R2). Larger multisubunit protein complex are also active, composed of (R1)n(R2)n. The cofactor is Fe cation.

It is found in the host membrane. The enzyme catalyses a 2'-deoxyribonucleoside 5'-diphosphate + [thioredoxin]-disulfide + H2O = a ribonucleoside 5'-diphosphate + [thioredoxin]-dithiol. In terms of biological role, ribonucleoside-diphosphate reductase holoenzyme provides the precursors necessary for viral DNA synthesis. Allows virus growth in non-dividing cells, as well as reactivation from latency in infected hosts. Catalyzes the biosynthesis of deoxyribonucleotides from the corresponding ribonucleotides. This is Ribonucleoside-diphosphate reductase small subunit from Saimiri sciureus (Common squirrel monkey).